Reading from the N-terminus, the 366-residue chain is Growth hormone secretagogue receptor type 1 (366 aa).

Residues 1-40 (MWNATPSEEPGPNLTLPDLGWDAPPENDSLVEELLPLFPT) lie on the Extracellular side of the membrane. 2 N-linked (GlcNAc...) asparagine glycosylation sites follow: Asn13 and Asn27. Residues 41–66 (PLLAGVTATCVALFVVGIAGNLLTML) form a helical membrane-spanning segment. Residues 67–72 (VVSRFR) are Cytoplasmic-facing. Residues 73–96 (EMRTTTNLYLSSMAFSDLLIFLCM) traverse the membrane as a helical segment. At 97–117 (PLDLFRLWQYRPWNLGNLLCK) the chain is on the extracellular side. Cys116 and Cys198 form a disulfide bridge. A helical transmembrane segment spans residues 118–139 (LFQFVSESCTYATVLTITALSV). Over 140 to 162 (ERYFAICFPLRAKVVVTKGRVKL) the chain is Cytoplasmic. The chain crosses the membrane as a helical span at residues 163 to 183 (VILVIWAVAFCSAGPIFVLVG). Over 184-211 (VEHDNGTDPRDTNECRATEFAVRSGLLT) the chain is Extracellular. Residues 212–235 (VMVWVSSVFFFLPVFCLTVLYSLI) form a helical membrane-spanning segment. At 236-263 (GRKLWRRKRGEAAVGSSLRDQNHKQTVK) the chain is on the cytoplasmic side. Residues 264–285 (MLAVVVFAFILCWLPFHVGRYL) traverse the membrane as a helical segment. Over 286–302 (FSKSLEPGSVEIAQISQ) the chain is Extracellular. The helical transmembrane segment at 303 to 326 (YCNLVSFVLFYLSAAINPILYNIM) threads the bilayer. The Cytoplasmic portion of the chain corresponds to 327–366 (SKKYRVAVFKLLGFEPFSQRKLSTLKDESSRAWTESSINT).

Belongs to the G-protein coupled receptor 1 family. Pituitary and hypothalamus.

It localises to the cell membrane. Functionally, receptor for ghrelin, coupled to G-alpha-11 proteins. Stimulates growth hormone secretion. Also binds other growth hormone releasing peptides (GHRP) (e.g. Met-enkephalin and GHRP-6) as well as non-peptide, low molecular weight secretagogues (e.g. L-692,429, MK-0677, adenosine). This Sus scrofa (Pig) protein is Growth hormone secretagogue receptor type 1 (GHSR).